The following is a 614-amino-acid chain: UvrABC system protein C (614 aa).

The GIY-YIG domain occupies 12–91 (ESPGVYLMKG…IKKHRPRYNL (80 aa)). The UVR domain maps to 201–236 (RDLLKTYRERMASAAANERYEEAARYRDLIRAIEVT).

This sequence belongs to the UvrC family. In terms of assembly, interacts with UvrB in an incision complex.

Its subcellular location is the cytoplasm. Its function is as follows. The UvrABC repair system catalyzes the recognition and processing of DNA lesions. UvrC both incises the 5' and 3' sides of the lesion. The N-terminal half is responsible for the 3' incision and the C-terminal half is responsible for the 5' incision. This is UvrABC system protein C from Geobacter metallireducens (strain ATCC 53774 / DSM 7210 / GS-15).